The chain runs to 302 residues: uncharacterized protein (302 aa).

An N-terminal signal peptide occupies residues 1–28; that stretch reads MNKLTAQNLLKKSRFLKYSLLTSISVGA.

This is an uncharacterized protein from Rickettsia prowazekii (strain Madrid E).